The chain runs to 230 residues: Ribosomal RNA large subunit methyltransferase E (230 aa).

Residues Gly-76, Trp-78, Asp-99, Asp-115, and Asp-139 each contribute to the S-adenosyl-L-methionine site. Lys-179 (proton acceptor) is an active-site residue.

The protein belongs to the class I-like SAM-binding methyltransferase superfamily. RNA methyltransferase RlmE family.

The protein localises to the cytoplasm. It catalyses the reaction uridine(2552) in 23S rRNA + S-adenosyl-L-methionine = 2'-O-methyluridine(2552) in 23S rRNA + S-adenosyl-L-homocysteine + H(+). Functionally, specifically methylates the uridine in position 2552 of 23S rRNA at the 2'-O position of the ribose in the fully assembled 50S ribosomal subunit. In Nitrobacter winogradskyi (strain ATCC 25391 / DSM 10237 / CIP 104748 / NCIMB 11846 / Nb-255), this protein is Ribosomal RNA large subunit methyltransferase E.